The following is a 1107-amino-acid chain: Probable chromatin-remodeling complex ATPase chain (1107 aa).

Disordered stretches follow at residues 1–124 and 177–217; these read MAKP…KREK and GNQS…GSGG. Composition is skewed to acidic residues over residues 8 to 25, 33 to 43, 53 to 65, and 89 to 114; these read DEEE…EEQS, GEEEDEEEEEA, GGEE…EEIE, and EGDE…DEAE. Positions 121-147 form a coiled coil; sequence KREKARLKEMQKLKKQKIQEILDTQNA. Over residues 183–193 the composition is skewed to basic residues; it reads KKPRGRGRHAS. A compositionally biased stretch (acidic residues) spans 197–211; sequence EEEEDEEYLKEEEDA. The Helicase ATP-binding domain maps to 243-408; it reads IRLYENGING…WSLLNFLLPE (166 aa). 256–263 provides a ligand contact to ATP; the sequence is DEMGLGKT. The short motif at 359-362 is the DEAH box element; that stretch reads DEAH. The Helicase C-terminal domain occupies 536–687; that stretch reads LLDKLLPKLK…ALVIQQGRLA (152 aa). SANT domains follow at residues 877–929 and 978–1039; these read EGFA…ERYK and QNKG…DTLI. The stretch at 1029–1067 forms a coiled coil; the sequence is QELARRCDTLIRLVEKENQEYDEQERQARKDKRMAKNMT. The disordered stretch occupies residues 1049–1107; that stretch reads YDEQERQARKDKRMAKNMTPTKRSALRVSEGETTPSNSFKRRRQSLMDDYVGSGRRKRG.

It belongs to the SNF2/RAD54 helicase family. ISWI subfamily.

It localises to the nucleus. In terms of biological role, possesses intrinsic ATP-dependent nucleosome-remodeling activity. Constitutes the catalytic subunit of several complexes capable of forming ordered nucleosome arrays on chromatin in vitro. This chain is Probable chromatin-remodeling complex ATPase chain, found in Oryza sativa subsp. japonica (Rice).